The primary structure comprises 353 residues: UDP-N-acetylglucosamine--N-acetylmuramyl-(pentapeptide) pyrophosphoryl-undecaprenol N-acetylglucosamine transferase (353 aa).

Residues 10 to 12 (TGG), Asn-124, Ser-183, and Gln-283 each bind UDP-N-acetyl-alpha-D-glucosamine.

The protein belongs to the glycosyltransferase 28 family. MurG subfamily.

It is found in the cell inner membrane. It catalyses the reaction di-trans,octa-cis-undecaprenyl diphospho-N-acetyl-alpha-D-muramoyl-L-alanyl-D-glutamyl-meso-2,6-diaminopimeloyl-D-alanyl-D-alanine + UDP-N-acetyl-alpha-D-glucosamine = di-trans,octa-cis-undecaprenyl diphospho-[N-acetyl-alpha-D-glucosaminyl-(1-&gt;4)]-N-acetyl-alpha-D-muramoyl-L-alanyl-D-glutamyl-meso-2,6-diaminopimeloyl-D-alanyl-D-alanine + UDP + H(+). Its pathway is cell wall biogenesis; peptidoglycan biosynthesis. Functionally, cell wall formation. Catalyzes the transfer of a GlcNAc subunit on undecaprenyl-pyrophosphoryl-MurNAc-pentapeptide (lipid intermediate I) to form undecaprenyl-pyrophosphoryl-MurNAc-(pentapeptide)GlcNAc (lipid intermediate II). This is UDP-N-acetylglucosamine--N-acetylmuramyl-(pentapeptide) pyrophosphoryl-undecaprenol N-acetylglucosamine transferase from Helicobacter pylori (strain ATCC 700392 / 26695) (Campylobacter pylori).